The following is a 543-amino-acid chain: Probable protein kinase UbiB (543 aa).

The Protein kinase domain maps to 123–501; it reads DFDIVPLASA…KRQQAKGQFL (379 aa). ATP-binding positions include 129 to 137 and Lys-152; that span reads LASASIAQV. Asp-287 (proton acceptor) is an active-site residue. The helical transmembrane segment at 517-539 threads the bilayer; that stretch reads TSNITALASISAATGVTFWLLSW.

The protein belongs to the ABC1 family. UbiB subfamily.

It localises to the cell inner membrane. Its pathway is cofactor biosynthesis; ubiquinone biosynthesis [regulation]. In terms of biological role, is probably a protein kinase regulator of UbiI activity which is involved in aerobic coenzyme Q (ubiquinone) biosynthesis. This Aliivibrio salmonicida (strain LFI1238) (Vibrio salmonicida (strain LFI1238)) protein is Probable protein kinase UbiB.